Consider the following 102-residue polypeptide: uncharacterized protein (102 aa).

3 consecutive transmembrane segments (helical) span residues 14-34 (IKNW…VISA), 35-55 (VAFT…LILI), and 76-96 (ILSI…HCYI).

It is found in the cell membrane. This is an uncharacterized protein from Methanocaldococcus jannaschii (strain ATCC 43067 / DSM 2661 / JAL-1 / JCM 10045 / NBRC 100440) (Methanococcus jannaschii).